We begin with the raw amino-acid sequence, 387 residues long: Large ribosomal subunit protein uL3 (387 aa).

A Phosphoserine modification is found at Ser-24. A Glycyl lysine isopeptide (Lys-Gly) (interchain with G-Cter in ubiquitin) cross-link involves residue Lys-39. A Phosphothreonine modification is found at Thr-103. A Glycyl lysine isopeptide (Lys-Gly) (interchain with G-Cter in ubiquitin) cross-link involves residue Lys-136. Ser-156 is subject to Phosphoserine. His-243 bears the Pros-methylhistidine mark. Ser-297 carries the post-translational modification Phosphoserine.

It belongs to the universal ribosomal protein uL3 family. As to quaternary structure, component of the large ribosomal subunit (LSU). Mature yeast ribosomes consist of a small (40S) and a large (60S) subunit. The 40S small subunit contains 1 molecule of ribosomal RNA (18S rRNA) and 33 different proteins (encoded by 57 genes). The large 60S subunit contains 3 rRNA molecules (25S, 5.8S and 5S rRNA) and 46 different proteins (encoded by 81 genes). uL3 forms together with ES39L one of the contact sites for the signal recognition particle that targets ribosomes to the endoplasmic reticulum membrane. Methylation at His-243 by HPM1 is required for proper 60S subunit assembly and promotes translational elongation fidelity.

Its subcellular location is the cytoplasm. Its function is as follows. Component of the ribosome, a large ribonucleoprotein complex responsible for the synthesis of proteins in the cell. The small ribosomal subunit (SSU) binds messenger RNAs (mRNAs) and translates the encoded message by selecting cognate aminoacyl-transfer RNA (tRNA) molecules. The large subunit (LSU) contains the ribosomal catalytic site termed the peptidyl transferase center (PTC), which catalyzes the formation of peptide bonds, thereby polymerizing the amino acids delivered by tRNAs into a polypeptide chain. The nascent polypeptides leave the ribosome through a tunnel in the LSU and interact with protein factors that function in enzymatic processing, targeting, and the membrane insertion of nascent chains at the exit of the ribosomal tunnel. uL3 plays a role in coordinating processes of accommodating the aminoacyl-tRNA in the PTC. This Saccharomyces cerevisiae (strain ATCC 204508 / S288c) (Baker's yeast) protein is Large ribosomal subunit protein uL3.